We begin with the raw amino-acid sequence, 374 residues long: 2,7-anhydro-N-acetylneuraminate hydratase (374 aa).

Positions 13, 14, 35, 38, 70, 72, 75, 92, 93, 162, and 163 each coordinate NAD(+).

Belongs to the Gfo/Idh/MocA family. In terms of assembly, homodimer. NAD(+) serves as cofactor.

It catalyses the reaction N-acetyl-2,7-anhydro-alpha-neuraminate + H2O = N-acetyl-alpha-neuraminate. With respect to regulation, neu5Ac is produced in the presence of NAD(+) or NADH, but not in the presence of FAD. Hydratase involved in the degradation of sialic acids, which are present in the host mucus layer and represent a much-coveted source of nutrients for R.gnavus, a prevalent member of the normal gut microbiota. Catalyzes the reversible conversion of the dehydrated form of N-acetylneuraminate (Neu5Ac), 2,7-anhydro-N-acetylneuraminate (2,7-AN), to Neu5Ac, allowing growth on 2,7-AN produced by the IT-sialidase NanH. Acts through a multistep mechanism involving a keto intermediate and cycling of NADH/NAD(+). This Mediterraneibacter gnavus (strain ATCC 29149 / DSM 114966 / JCM 6515 / VPI C7-9) (Ruminococcus gnavus) protein is 2,7-anhydro-N-acetylneuraminate hydratase.